We begin with the raw amino-acid sequence, 120 residues long: Ribosome-binding factor A (120 aa).

The protein belongs to the RbfA family. In terms of assembly, monomer. Binds 30S ribosomal subunits, but not 50S ribosomal subunits or 70S ribosomes.

Its subcellular location is the cytoplasm. Its function is as follows. One of several proteins that assist in the late maturation steps of the functional core of the 30S ribosomal subunit. Associates with free 30S ribosomal subunits (but not with 30S subunits that are part of 70S ribosomes or polysomes). Required for efficient processing of 16S rRNA. May interact with the 5'-terminal helix region of 16S rRNA. The chain is Ribosome-binding factor A from Chlamydia abortus (strain DSM 27085 / S26/3) (Chlamydophila abortus).